The primary structure comprises 294 residues: Epimerase family protein SDR39U1 (294 aa).

Residues 31–32 (SR), 58–59 (LA), glutamate 77, arginine 82, and valine 160 contribute to the NADP(+) site.

The protein belongs to the NAD(P)-dependent epimerase/dehydratase family. SDR39U1 subfamily.

Functionally, putative NADP-dependent oxidoreductase. The protein is Epimerase family protein SDR39U1 (SDR39U1) of Bos taurus (Bovine).